We begin with the raw amino-acid sequence, 83 residues long: UPF0297 protein DSY2420 (83 aa).

The protein belongs to the UPF0297 family.

This is UPF0297 protein DSY2420 from Desulfitobacterium hafniense (strain Y51).